Consider the following 524-residue polypeptide: Alkaline phosphatase, tissue-nonspecific isozyme (524 aa).

The signal sequence occupies residues M1–S17. D60 is a binding site for Mg(2+). Residues D60 and S110 each contribute to the Zn(2+) site. The Phosphoserine intermediate role is filled by S110. S110 is subject to Phosphoserine. The cysteines at positions 139 and 201 are disulfide-linked. Residue N140 is glycosylated (N-linked (GlcNAc...) asparagine). T173 lines the Mg(2+) pocket. N230 is a glycosylation site (N-linked (GlcNAc...) asparagine). Residue E235 coordinates Ca(2+). An N-linked (GlcNAc...) asparagine glycan is attached at N271. Ca(2+)-binding residues include F290 and E291. N-linked (GlcNAc...) asparagine glycosylation is present at N303. D306 contributes to the Ca(2+) binding site. Position 332 (E332) interacts with Mg(2+). Residues D337, H341, D378, and H379 each contribute to the Zn(2+) site. N-linked (GlcNAc...) asparagine glycosylation is present at N430. Residue H454 participates in Zn(2+) binding. C489 and C497 are disulfide-bonded. A lipid anchor (GPI-anchor amidated serine) is attached at S499. Positions A500–F524 are cleaved as a propeptide — removed in mature form.

It belongs to the alkaline phosphatase family. Homodimer. Mg(2+) is required as a cofactor. Requires Zn(2+) as cofactor. It depends on Ca(2+) as a cofactor. N-glycosylated.

Its subcellular location is the cell membrane. It is found in the extracellular vesicle membrane. The protein resides in the mitochondrion membrane. The protein localises to the mitochondrion intermembrane space. The catalysed reaction is a phosphate monoester + H2O = an alcohol + phosphate. It carries out the reaction diphosphate + H2O = 2 phosphate + H(+). The enzyme catalyses pyridoxal 5'-phosphate + H2O = pyridoxal + phosphate. It catalyses the reaction phosphoethanolamine + H2O = ethanolamine + phosphate. The catalysed reaction is N-phosphocreatine + H2O = creatine + phosphate. It carries out the reaction ATP + H2O = ADP + phosphate + H(+). The enzyme catalyses ADP + H2O = AMP + phosphate + H(+). It catalyses the reaction AMP + H2O = adenosine + phosphate. Phosphatase activity is specifically inhibited by 5-((5-chloro-2-methoxyphenyl)sulfonamido)nicotinamide (SBI-425). In terms of biological role, alkaline phosphatase that metabolizes various phosphate compounds and plays a key role in skeletal mineralization and adaptive thermogenesis. Has broad substrate specificity and can hydrolyze a considerable variety of compounds: however, only a few substrates, such as diphosphate (inorganic pyrophosphate; PPi), pyridoxal 5'-phosphate (PLP) and N-phosphocreatine are natural substrates. Plays an essential role in skeletal and dental mineralization via its ability to hydrolyze extracellular diphosphate, a potent mineralization inhibitor, to phosphate: it thereby promotes hydroxyapatite crystal formation and increases inorganic phosphate concentration. Acts in a non-redundant manner with PHOSPHO1 in skeletal mineralization: while PHOSPHO1 mediates the initiation of hydroxyapatite crystallization in the matrix vesicles (MVs), ALPL/TNAP catalyzes the spread of hydroxyapatite crystallization in the extracellular matrix. Also promotes dephosphorylation of osteopontin (SSP1), an inhibitor of hydroxyapatite crystallization in its phosphorylated state; it is however unclear whether ALPL/TNAP mediates SSP1 dephosphorylation via a direct or indirect manner. Catalyzes dephosphorylation of PLP to pyridoxal (PL), the transportable form of vitamin B6, in order to provide a sufficient amount of PLP in the brain, an essential cofactor for enzymes catalyzing the synthesis of diverse neurotransmitters. Additionally, also able to mediate ATP degradation in a stepwise manner to adenosine, thereby regulating the availability of ligands for purinergic receptors. Also capable of dephosphorylating microbial products, such as lipopolysaccharides (LPS) as well as other phosphorylated small-molecules, such as poly-inosine:cytosine (poly I:C). Acts as a key regulator of adaptive thermogenesis as part of the futile creatine cycle: localizes to the mitochondria of thermogenic fat cells and acts by mediating hydrolysis of N-phosphocreatine to initiate a futile cycle of creatine dephosphorylation and phosphorylation. During the futile creatine cycle, creatine and N-phosphocreatine are in a futile cycle, which dissipates the high energy charge of N-phosphocreatine as heat without performing any mechanical or chemical work. This is Alkaline phosphatase, tissue-nonspecific isozyme (ALPL) from Bos taurus (Bovine).